A 179-amino-acid polypeptide reads, in one-letter code: Small heat shock protein hspK (179 aa).

The sHSP domain occupies 32 to 178; it reads HRINIWRPTV…DRLKIPIQSK (147 aa). Residues 80–122 form a disordered region; it reads KKSKGGLNNLPSSSSSINSDSTTNTNTNTTTTTTTAPPPPSDA. Positions 87–114 are enriched in low complexity; it reads NNLPSSSSSINSDSTTNTNTNTTTTTTT.

The protein belongs to the small heat shock protein (HSP20) family.

This chain is Small heat shock protein hspK (hspK), found in Dictyostelium discoideum (Social amoeba).